Here is a 189-residue protein sequence, read N- to C-terminus: MKERSSSPGTPDSGRRARPKPAKLKMTVQYATSTREPLPSRALLRKWVKAALAHDAEIALRIVDEEEGHRLNRDFRNKDYATNVLTFVYRDGQIHPDSPLGEKRGAYPLTGDIVLCAPVVENEAGQQQKDLMAHYAHLTVHGVLHLQGYDHQEDEDAKNMEETETRILAWLGYEDPYAGYQLAEAVDCG.

Positions 1-10 are enriched in polar residues; sequence MKERSSSPGT. Residues 1–23 are disordered; that stretch reads MKERSSSPGTPDSGRRARPKPAK. 3 residues coordinate Zn(2+): histidine 141, histidine 145, and histidine 151.

Belongs to the endoribonuclease YbeY family. The cofactor is Zn(2+).

It localises to the cytoplasm. Functionally, single strand-specific metallo-endoribonuclease involved in late-stage 70S ribosome quality control and in maturation of the 3' terminus of the 16S rRNA. The sequence is that of Endoribonuclease YbeY from Nitrosospira multiformis (strain ATCC 25196 / NCIMB 11849 / C 71).